Here is a 200-residue protein sequence, read N- to C-terminus: Acyl-homoserine-lactone synthase (200 aa).

The protein belongs to the autoinducer synthase family.

It catalyses the reaction a fatty acyl-[ACP] + S-adenosyl-L-methionine = an N-acyl-L-homoserine lactone + S-methyl-5'-thioadenosine + holo-[ACP] + H(+). In terms of biological role, required for the synthesis of BHL (N-butanoyl-L-homoserine lactone). The sequence is that of Acyl-homoserine-lactone synthase (swrI) from Serratia liquefaciens.